Reading from the N-terminus, the 434-residue chain is Glutamyl-tRNA reductase (434 aa).

Substrate-binding positions include 49–52 (TCNR), serine 109, 114–116 (EPQ), and glutamine 120. Residue cysteine 50 is the Nucleophile of the active site. 189–194 (GAGEMC) contacts NADP(+).

The protein belongs to the glutamyl-tRNA reductase family. Homodimer.

The catalysed reaction is (S)-4-amino-5-oxopentanoate + tRNA(Glu) + NADP(+) = L-glutamyl-tRNA(Glu) + NADPH + H(+). It functions in the pathway porphyrin-containing compound metabolism; protoporphyrin-IX biosynthesis; 5-aminolevulinate from L-glutamyl-tRNA(Glu): step 1/2. Functionally, catalyzes the NADPH-dependent reduction of glutamyl-tRNA(Glu) to glutamate 1-semialdehyde (GSA). In Geobacter sulfurreducens (strain ATCC 51573 / DSM 12127 / PCA), this protein is Glutamyl-tRNA reductase.